Consider the following 636-residue polypeptide: 1-deoxy-D-xylulose-5-phosphate synthase (636 aa).

Thiamine diphosphate-binding positions include His-77 and 118–120; that span reads GHS. Residue Asp-149 participates in Mg(2+) binding. Residues 150–151, Asn-178, Tyr-290, and Glu-375 contribute to the thiamine diphosphate site; that span reads GA. A Mg(2+)-binding site is contributed by Asn-178.

This sequence belongs to the transketolase family. DXPS subfamily. As to quaternary structure, homodimer. The cofactor is Mg(2+). Thiamine diphosphate serves as cofactor.

The enzyme catalyses D-glyceraldehyde 3-phosphate + pyruvate + H(+) = 1-deoxy-D-xylulose 5-phosphate + CO2. Its pathway is metabolic intermediate biosynthesis; 1-deoxy-D-xylulose 5-phosphate biosynthesis; 1-deoxy-D-xylulose 5-phosphate from D-glyceraldehyde 3-phosphate and pyruvate: step 1/1. Catalyzes the acyloin condensation reaction between C atoms 2 and 3 of pyruvate and glyceraldehyde 3-phosphate to yield 1-deoxy-D-xylulose-5-phosphate (DXP). The sequence is that of 1-deoxy-D-xylulose-5-phosphate synthase from Cytophaga hutchinsonii (strain ATCC 33406 / DSM 1761 / CIP 103989 / NBRC 15051 / NCIMB 9469 / D465).